A 321-amino-acid polypeptide reads, in one-letter code: Ribonuclease Z (321 aa).

Zn(2+) is bound by residues H62, H64, D66, H67, H139, D210, and H268. The Proton acceptor role is filled by D66.

This sequence belongs to the RNase Z family. Homodimer. It depends on Zn(2+) as a cofactor.

The catalysed reaction is Endonucleolytic cleavage of RNA, removing extra 3' nucleotides from tRNA precursor, generating 3' termini of tRNAs. A 3'-hydroxy group is left at the tRNA terminus and a 5'-phosphoryl group is left at the trailer molecule.. Functionally, zinc phosphodiesterase, which displays some tRNA 3'-processing endonuclease activity. Probably involved in tRNA maturation, by removing a 3'-trailer from precursor tRNA. In Trichodesmium erythraeum (strain IMS101), this protein is Ribonuclease Z.